The following is a 333-amino-acid chain: MSTLKEKLITQIASERTIPNSKVTVVGVGQVGMACAISILGKRLGDELALVDVWEDKLKGEMMDLQHGSLFLQTHKIVADKDYAVTANSKIVVVTAGVRQQEGESRLNLVQRNVNVFKFIIPQIIKYSPDCTILVVSNPVDILTYVTWKLSGLPKHRVIGSGCNLDSARFRYLMSEKLGIHPSSCHGWILGEHGDSSVAVWSGVNVAGVSLQELNPAMGTDRDSEKWKEVHKQVVESAYEVIKLKGYTNWAIGLSVADLLETMMKNLCRVHPVSTMVKGMYGIENEVFLSLPCVLSASGLTSVINQKLKDDEVAQLRSSADTLWSIQKDLKDL.

Residues 29–57 (GQVG…WEDK) and R99 contribute to the NAD(+) site. The substrate site is built by R106, N138, and R169. N138 contributes to the NAD(+) binding site. Residue H193 is the Proton acceptor of the active site. Residue T248 participates in substrate binding.

This sequence belongs to the LDH/MDH superfamily. LDH family. In terms of assembly, homotetramer.

Its subcellular location is the cytoplasm. The catalysed reaction is (S)-lactate + NAD(+) = pyruvate + NADH + H(+). It functions in the pathway fermentation; pyruvate fermentation to lactate; (S)-lactate from pyruvate: step 1/1. Functionally, interconverts simultaneously and stereospecifically pyruvate and lactate with concomitant interconversion of NADH and NAD(+). The polypeptide is L-lactate dehydrogenase B chain (LDHB) (Alligator mississippiensis (American alligator)).